We begin with the raw amino-acid sequence, 34 residues long: Photosystem II reaction center protein M (34 aa).

Residues 5–25 (ILGLTATALFIIIPTSFLLIL) traverse the membrane as a helical segment.

Belongs to the PsbM family. In terms of assembly, PSII is composed of 1 copy each of membrane proteins PsbA, PsbB, PsbC, PsbD, PsbE, PsbF, PsbH, PsbI, PsbJ, PsbK, PsbL, PsbM, PsbT, PsbX, PsbY, PsbZ, Psb30/Ycf12, at least 3 peripheral proteins of the oxygen-evolving complex and a large number of cofactors. It forms dimeric complexes.

The protein localises to the plastid. It is found in the chloroplast thylakoid membrane. In terms of biological role, one of the components of the core complex of photosystem II (PSII). PSII is a light-driven water:plastoquinone oxidoreductase that uses light energy to abstract electrons from H(2)O, generating O(2) and a proton gradient subsequently used for ATP formation. It consists of a core antenna complex that captures photons, and an electron transfer chain that converts photonic excitation into a charge separation. This subunit is found at the monomer-monomer interface. The sequence is that of Photosystem II reaction center protein M from Stigeoclonium helveticum (Green alga).